The sequence spans 188 residues: Nicotinamide-nucleotide adenylyltransferase (188 aa).

The disordered stretch occupies residues 166–188 (SDSLERYAATGESLPESLDDLDD).

Belongs to the archaeal NMN adenylyltransferase family.

It is found in the cytoplasm. It carries out the reaction beta-nicotinamide D-ribonucleotide + ATP + H(+) = diphosphate + NAD(+). Its pathway is cofactor biosynthesis; NAD(+) biosynthesis; NAD(+) from nicotinamide D-ribonucleotide: step 1/1. This Haloarcula marismortui (strain ATCC 43049 / DSM 3752 / JCM 8966 / VKM B-1809) (Halobacterium marismortui) protein is Nicotinamide-nucleotide adenylyltransferase.